A 405-amino-acid chain; its full sequence is Cystathionine gamma-lyase (405 aa).

Residues arginine 62, tyrosine 114, and arginine 119 each contribute to the substrate site. Position 212 is an N6-(pyridoxal phosphate)lysine (lysine 212). Residue glutamate 339 participates in substrate binding.

This sequence belongs to the trans-sulfuration enzymes family. In terms of assembly, homotetramer. Interacts with CALM in a calcium-dependent manner. Requires pyridoxal 5'-phosphate as cofactor.

The protein localises to the cytoplasm. It carries out the reaction L,L-cystathionine + H2O = 2-oxobutanoate + L-cysteine + NH4(+). It catalyses the reaction L-cysteine + H2O = hydrogen sulfide + pyruvate + NH4(+) + H(+). The enzyme catalyses L-homocysteine + H2O = 2-oxobutanoate + hydrogen sulfide + NH4(+) + H(+). The catalysed reaction is L-homoserine = 2-oxobutanoate + NH4(+). It carries out the reaction L-selenocystathionine + H2O = L-selenocysteine + 2-oxobutanoate + NH4(+). Its pathway is amino-acid biosynthesis; L-cysteine biosynthesis; L-cysteine from L-homocysteine and L-serine: step 2/2. Functionally, catalyzes the last step in the trans-sulfuration pathway from L-methionine to L-cysteine in a pyridoxal-5'-phosphate (PLP)-dependent manner, which consists on cleaving the L,L-cystathionine molecule into L-cysteine, ammonia and 2-oxobutanoate. Part of the L-cysteine derived from the trans-sulfuration pathway is utilized for biosynthesis of the ubiquitous antioxidant glutathione. Besides its role in the conversion of L-cystathionine into L-cysteine, it utilizes L-cysteine and L-homocysteine as substrates (at much lower rates than L,L-cystathionine) to produce hydrogen sulfide (H2S). In vitro, it converts two L-cysteine molecules into lanthionine and H2S, and two L-homocysteine molecules to homolanthionine and H2S, which can be particularly relevant under conditions of severe hyperhomocysteinemia. Lanthionine and homolanthionine are structural homologs of L,L-cystathionine that differ by the absence or presence of an extra methylene group, respectively. Acts as a cysteine-protein sulfhydrase by mediating sulfhydration of target proteins: sulfhydration consists of converting -SH groups into -SSH on specific cysteine residues of target proteins such as GAPDH, PTPN1 and NF-kappa-B subunit RELA, thereby regulating their function. By generating the gasotransmitter H2S, it participates in a number of physiological processes such as vasodilation, bone protection, and inflammation. Plays an essential role in myogenesis by contributing to the biogenesis of H2S in skeletal muscle tissue. Can also accept homoserine as substrate. Catalyzes the elimination of selenocystathionine (which can be derived from the diet) to yield selenocysteine, ammonia and 2-oxobutanoate. The sequence is that of Cystathionine gamma-lyase (CTH) from Macaca fascicularis (Crab-eating macaque).